The following is a 796-amino-acid chain: Potassium transporter 10 (796 aa).

The disordered stretch occupies residues 1 to 30 (MAGRVESSIGGGEIDEEGDERGSMWDLDQS). The Cytoplasmic segment spans residues 1-58 (MAGRVESSIGGGEIDEEGDERGSMWDLDQSLDQPMDEEAGRLRNMYREKKFSAFLLLQ). Residues 59–79 (LSFQSLGVVYGDLGTSPLYVF) traverse the membrane as a helical segment. The Extracellular portion of the chain corresponds to 80–95 (YNTFPRGIKDPEDIIG). A helical transmembrane segment spans residues 96-116 (ALSLIIYSLTLIPLLKYVFVV). The Cytoplasmic segment spans residues 117–184 (CKANDNGQGG…ENGTSRKNAL (68 aa)). A helical transmembrane segment spans residues 185 to 205 (LILVLVGTCMVIGDGILTPAI). Residues 206 to 217 (SVLSAAGGLRVN) are Extracellular-facing. The chain crosses the membrane as a helical span at residues 218 to 238 (LPHINNGIVVVVAVVILVSLF). Over 239 to 248 (SVQHYGTDRV) the chain is Cytoplasmic. A helical transmembrane segment spans residues 249–269 (GWLFAPIVFLWFLFIASIGMF). Topologically, residues 270–298 (NIWKHDPSVLKAFSPVYIFRYFKRGGQDR) are extracellular. A helical membrane pass occupies residues 299 to 319 (WTSLGGIMLSITGIEALFADL). Residues 320–321 (SH) lie on the Cytoplasmic side of the membrane. The helical transmembrane segment at 322-342 (FPVSAVQFAFTVIVFPCLLLA) threads the bilayer. At 343–368 (YSGQAAYLRKYPHHVEDAFYQSIPKR) the chain is on the extracellular side. The chain crosses the membrane as a helical span at residues 369 to 389 (VYWPMFIIATAAAIVASQATI). At 390–420 (SATFSLIKQALAHGCFPRVKVVHTSRKFLGQ) the chain is on the cytoplasmic side. A helical membrane pass occupies residues 421-441 (IYVPDINWILMILCIAVTAGF). Residues 442–453 (KNQNQIGNAYGT) lie on the Extracellular side of the membrane. A helical membrane pass occupies residues 454-474 (AVVIVMLVTTLLMMLIMILVW). Topologically, residues 475–480 (RCHWVL) are cytoplasmic. The helical transmembrane segment at 481-501 (VLLFTLLSLVVECTYFSAVLF) threads the bilayer. The Extracellular portion of the chain corresponds to 502 to 505 (KVNQ). Residues 506 to 526 (GGWVPLVIAAAFLVIMYVWHY) form a helical membrane-spanning segment. Topologically, residues 527–796 (GTLKRYEFEM…LLNVGQIFYV (270 aa)) are cytoplasmic.

This sequence belongs to the HAK/KUP transporter (TC 2.A.72.3) family.

Its subcellular location is the cell membrane. In terms of biological role, putative potassium transporter. The polypeptide is Potassium transporter 10 (POT10) (Arabidopsis thaliana (Mouse-ear cress)).